Here is a 426-residue protein sequence, read N- to C-terminus: Histidine--tRNA ligase (426 aa).

It belongs to the class-II aminoacyl-tRNA synthetase family. In terms of assembly, homodimer.

The protein localises to the cytoplasm. It carries out the reaction tRNA(His) + L-histidine + ATP = L-histidyl-tRNA(His) + AMP + diphosphate + H(+). The sequence is that of Histidine--tRNA ligase from Prochlorococcus marinus (strain MIT 9312).